Reading from the N-terminus, the 88-residue chain is UPF0297 protein BPUM_2379 (88 aa).

The protein belongs to the UPF0297 family.

This is UPF0297 protein BPUM_2379 from Bacillus pumilus (strain SAFR-032).